Consider the following 60-residue polypeptide: UPF0337 protein SACOL1680 (60 aa).

The protein belongs to the UPF0337 (CsbD) family.

The sequence is that of UPF0337 protein SACOL1680 from Staphylococcus aureus (strain COL).